Reading from the N-terminus, the 427-residue chain is Trigger factor (427 aa).

The PPIase FKBP-type domain occupies 163-248 (GDTVVIDFVG…IHEVKAKEVP (86 aa)).

This sequence belongs to the FKBP-type PPIase family. Tig subfamily.

The protein localises to the cytoplasm. It catalyses the reaction [protein]-peptidylproline (omega=180) = [protein]-peptidylproline (omega=0). In terms of biological role, involved in protein export. Acts as a chaperone by maintaining the newly synthesized protein in an open conformation. Functions as a peptidyl-prolyl cis-trans isomerase. This is Trigger factor from Streptococcus pneumoniae (strain ATCC 700669 / Spain 23F-1).